A 287-amino-acid polypeptide reads, in one-letter code: MATSNSKPTQVLLATFLTFFFLLLNNVNSSDELSFTINNFVPNEADLLFQGEASVSSTGVLQLTRVENGQPQKYSVGRALYAAPVRIWDNTTGSVASFSTSFTFVVKAPNPDITSDGLAFYLAPPDSQIPSGSVSKYLGLFNNSNSDSSNQIVAVELDTYFAHSYDPWDPNYRHIGIDVNGIESIKTVQWDWINGGVAFATITYLAPNKTLIASLVYPSNQTTFSVAASVDLKEILPEWVRVGFSAATGYPTEVETHDVLSWSFTSTLEANCDAATENNVHIARYTA.

An N-terminal signal peptide occupies residues 1 to 29 (MATSNSKPTQVLLATFLTFFFLLLNNVNS). Tyr-74 is an N-acetyl-alpha-neuraminyl-(2-&gt;3)-beta-D-galactosyl-(1-&gt;4)-beta-D-glucose binding site. The N-linked (GlcNAc...) (paucimannose) asparagine glycan is linked to Asn-90. N-acetyl-alpha-neuraminyl-(2-&gt;3)-beta-D-galactosyl-(1-&gt;4)-beta-D-glucose is bound by residues Asp-116, Ser-133, and Lys-136. The N-linked (GlcNAc...) (paucimannose) asparagine glycan is linked to Asn-142. 2 residues coordinate Mn(2+): Glu-156 and Asp-158. Ca(2+) contacts are provided by Asp-158, Tyr-160, Asp-166, and Asp-169. Residues Tyr-160 and Asp-166 each contribute to the N-acetyl-alpha-neuraminyl-(2-&gt;3)-beta-D-galactosyl-(1-&gt;4)-beta-D-glucose site. Residues Asp-169 and His-174 each contribute to the Mn(2+) site. A glycan (N-linked (GlcNAc...) (high mannose) asparagine; partial) is linked at Asn-208. An N-linked (GlcNAc...) (paucimannose) asparagine; partial glycan is attached at Asn-220. Residue Glu-253 participates in N-acetyl-alpha-neuraminyl-(2-&gt;3)-beta-D-galactosyl-(1-&gt;4)-beta-D-glucose binding. The propeptide at 279–287 (NVHIARYTA) is removed in mature form.

This sequence belongs to the leguminous lectin family. As to quaternary structure, homodimer; disulfide-linked. Dimer of homodimers. The glycosylation on N-90 is determined to by of the high mannose type in PubMed:26003537, while PubMed:27720757 found a paucimannose at this position. In terms of processing, processed at its C-terminus.

Its function is as follows. Sialic acid-binding lectin recognizing oligosaccharides containing terminal sialic acid linked via alpha-2,3 bond to penultimate galactose residues. Binds the trisaccharide sequence Neu5Ac-alpha-2,3-Gal-beta-1,4-GlcNAc. Binds fetuin when fully glycosylated but not when the high mannose-type glycans are removed, although the secondary structure is virtually unaffected by deglycosylation of the high mannose-type glycans. The lectin activity may depend on the presence of a single GlcNAc attached to N-90. This chain is Seed leukoagglutinin, found in Maackia amurensis (Amur maackia).